We begin with the raw amino-acid sequence, 84 residues long: CLAVATA3/ESR (CLE)-related protein 13 (84 aa).

Residues 1 to 29 form the signal peptide; sequence MGRYTTDQVQVYVLVIVLCTFFSTLQARS. Positions 57–84 are disordered; the sequence is KQVRDISGDRLSPAGPDPQHNGRSPPRK. 2 positions are modified to hydroxyproline: Pro-69 and Pro-72. The O-linked (Ara...) hydroxyproline glycan is linked to Pro-72.

The protein belongs to the CLV3/ESR signal peptide family. The O-glycosylation (arabinosylation) of the hydroxyproline Pro-72 enhances binding affinity of the CLE13p peptide for its receptor. As to expression, expressed in young nodules throughout the central tissue. Expressed in the apical region of elongated nodules, corresponding to the meristematic and early infection zones.

It is found in the secreted. Its subcellular location is the extracellular space. Functionally, signaling peptide involved in the regulation of nodulation. Moves from root to shoot to function with the receptor kinase SUNN, in a signaling pathway that plays roles during cellular differentiation, both at the onset of nodulation, and later during nodule meristem development and subsequent homeostasis. Interacts with SUNN signaling to control nodule numbers. SUNN is involved in the autoregulation of nodulation (AON), a long distance systemic signaling from root to shoot and back again, which allows legumes to limit the number of root nodules formed based on available nitrogen and previous rhizobial colonization. This chain is CLAVATA3/ESR (CLE)-related protein 13, found in Medicago truncatula (Barrel medic).